We begin with the raw amino-acid sequence, 444 residues long: tRNA-2-methylthio-N(6)-dimethylallyladenosine synthase (444 aa).

Residues 3–117 enclose the MTTase N-terminal domain; the sequence is RGLYIESYGC…LPELIMKVKR (115 aa). [4Fe-4S] cluster-binding residues include Cys12, Cys48, Cys80, Cys155, Cys159, and Cys162. One can recognise a Radical SAM core domain in the interval 141 to 374; it reads ANGGVSAYVS…LLTKQQLQFN (234 aa). A TRAM domain is found at 375 to 441; sequence KSMEGRVMDV…QNSLEGTVLS (67 aa).

It belongs to the methylthiotransferase family. MiaB subfamily. As to quaternary structure, monomer. [4Fe-4S] cluster serves as cofactor.

The protein resides in the cytoplasm. The enzyme catalyses N(6)-dimethylallyladenosine(37) in tRNA + (sulfur carrier)-SH + AH2 + 2 S-adenosyl-L-methionine = 2-methylsulfanyl-N(6)-dimethylallyladenosine(37) in tRNA + (sulfur carrier)-H + 5'-deoxyadenosine + L-methionine + A + S-adenosyl-L-homocysteine + 2 H(+). Functionally, catalyzes the methylthiolation of N6-(dimethylallyl)adenosine (i(6)A), leading to the formation of 2-methylthio-N6-(dimethylallyl)adenosine (ms(2)i(6)A) at position 37 in tRNAs that read codons beginning with uridine. The chain is tRNA-2-methylthio-N(6)-dimethylallyladenosine synthase from Anaplasma phagocytophilum (strain HZ).